The sequence spans 283 residues: Putative 4-diphosphocytidyl-2-C-methyl-D-erythritol kinase (283 aa).

Lys11 is a catalytic residue. 95–105 (PVCAGMGGGSS) provides a ligand contact to ATP. Asp137 is an active-site residue.

Belongs to the GHMP kinase family. IspE subfamily.

It carries out the reaction 4-CDP-2-C-methyl-D-erythritol + ATP = 4-CDP-2-C-methyl-D-erythritol 2-phosphate + ADP + H(+). Functionally, catalyzes the phosphorylation of the position 2 hydroxy group of 4-diphosphocytidyl-2C-methyl-D-erythritol. This Streptococcus equi subsp. equi (strain 4047) protein is Putative 4-diphosphocytidyl-2-C-methyl-D-erythritol kinase.